A 223-amino-acid polypeptide reads, in one-letter code: ATP-dependent dethiobiotin synthetase BioD (223 aa).

T16 is a binding site for Mg(2+). Residue K37 is part of the active site. S41 is a binding site for substrate. 2 residues coordinate Mg(2+): D50 and E111. ATP is bound by residues D50, 111 to 114 (EGAG), 171 to 172 (NQ), 201 to 203 (AHV), and E208.

The protein belongs to the dethiobiotin synthetase family. In terms of assembly, homodimer. Requires Mg(2+) as cofactor.

Its subcellular location is the cytoplasm. The catalysed reaction is (7R,8S)-7,8-diammoniononanoate + CO2 + ATP = (4R,5S)-dethiobiotin + ADP + phosphate + 3 H(+). It participates in cofactor biosynthesis; biotin biosynthesis; biotin from 7,8-diaminononanoate: step 1/2. Its function is as follows. Catalyzes a mechanistically unusual reaction, the ATP-dependent insertion of CO2 between the N7 and N8 nitrogen atoms of 7,8-diaminopelargonic acid (DAPA, also called 7,8-diammoniononanoate) to form a ureido ring. This Anaeromyxobacter sp. (strain Fw109-5) protein is ATP-dependent dethiobiotin synthetase BioD.